Reading from the N-terminus, the 164-residue chain is E3 ubiquitin ligase complex SCF subunit sconC (164 aa).

Residues 106–164 are interaction with the F-box domain of F-box proteins; the sequence is ILAANYLDIKALLDVGCKTVANMIKGKSPEEIRKTFNIQNDFTPEEEDQIRRENEWAEE.

It belongs to the SKP1 family. As to quaternary structure, component of the SCF (SKP1-CUL1-F-box protein) E3 ubiquitin ligase complexes.

It functions in the pathway protein modification; protein ubiquitination. Functionally, essential component of the SCF (SKP1-CUL1-F-box protein) E3 ubiquitin ligase complexes, which mediate the ubiquitination and subsequent proteasomal degradation of target proteins. Controls sulfur metabolite repression, probably by mediating the inactivation or degradation of the metR transcription factor. This is E3 ubiquitin ligase complex SCF subunit sconC (sconC) from Arthroderma benhamiae (strain ATCC MYA-4681 / CBS 112371) (Trichophyton mentagrophytes).